The chain runs to 100 residues: UPF0213 protein YhbQ (100 aa).

One can recognise a GIY-YIG domain in the interval 2-77 (TPWFLYLIRT…KQLTKRQKER (76 aa)).

It belongs to the UPF0213 family.

In Escherichia fergusonii (strain ATCC 35469 / DSM 13698 / CCUG 18766 / IAM 14443 / JCM 21226 / LMG 7866 / NBRC 102419 / NCTC 12128 / CDC 0568-73), this protein is UPF0213 protein YhbQ.